The following is an 89-amino-acid chain: UPF0335 protein Nham_1221 (89 aa).

This sequence belongs to the UPF0335 family.

In Nitrobacter hamburgensis (strain DSM 10229 / NCIMB 13809 / X14), this protein is UPF0335 protein Nham_1221.